A 2074-amino-acid chain; its full sequence is Cell adhesion molecule Dscam2 (2074 aa).

Residues 1 to 21 form the signal peptide; sequence MWISSRFFVILLLLNLDNTCS. Over 22–1619 the chain is Extracellular; that stretch reads EPFEAHLRGP…QTTVIFANIN (1598 aa). Ig-like C2-type domains lie at 31–120, 238–326, 330–417, 422–516, 521–607, 612–698, 707–802, and 805–902; these read PGFV…RIVS, PSVV…LRLT, PIQV…AELQ, PPVL…ARLN, PYIR…GEVT, PSIE…IKYT, PRWI…LKVN, and PYFS…LQVQ. 8 disulfide bridges follow: cysteine 53–cysteine 109, cysteine 259–cysteine 310, cysteine 352–cysteine 400, cysteine 444–cysteine 500, cysteine 541–cysteine 590, cysteine 633–cysteine 686, cysteine 728–cysteine 783, and cysteine 826–cysteine 884. Fibronectin type-III domains are found at residues 907–1003, 1008–1108, 1113–1211, and 1215–1311; these read PPSV…TEPQ, PPLS…TMED, PPED…SEED, and APAD…TNRI. The 89-residue stretch at 1312–1400 folds into the Ig-like C2-type 9 domain; it reads PARIISFGGP…DRLTHTLIVQ (89 aa). Residues cysteine 1334 and cysteine 1382 are joined by a disulfide bond. Fibronectin type-III domains lie at 1402-1495 and 1496-1595; these read PPTA…TQGQ and SPGH…TKDG. Residues 1620–1640 form a helical membrane-spanning segment; that stretch reads LLIPTIAAVSGMFCTIIMIIV. At 1641 to 2074 the chain is on the cytoplasmic side; the sequence is CYRHMLKNAP…KFFTAPTLPK (434 aa). 4 disordered regions span residues 1739–1766, 1778–1917, 1936–1974, and 2011–2074; these read EGCS…HQRP, PFHN…KSIS, SPSI…SLKQ, and PSSQ…TLPK. A compositionally biased stretch (basic residues) spans 1757 to 1766; that stretch reads THHHHHHQRP. A compositionally biased stretch (polar residues) spans 1831–1846; it reads AQSSTSSDLSPMSEQK. The segment covering 1848-1858 has biased composition (basic residues); sequence LPRRGRSRYHH. Residues 1859-1868 are compositionally biased toward polar residues; the sequence is QQYQFSTNTT. Low complexity-rich tracts occupy residues 1875-1903, 1942-1974, and 2036-2051; these read NKMN…SNSN, QQQK…SLKQ, and SQQS…QQHP. Residues 2055–2066 show a composition bias toward polar residues; it reads LNPSTAMLSSKF.

It is found in the membrane. Cell adhesion molecule. The protein is Cell adhesion molecule Dscam2 (Dscam2) of Drosophila melanogaster (Fruit fly).